Reading from the N-terminus, the 165-residue chain is 3-isopropylmalate dehydratase small subunit (165 aa).

Belongs to the LeuD family. LeuD type 2 subfamily. Heterodimer of LeuC and LeuD.

The catalysed reaction is (2R,3S)-3-isopropylmalate = (2S)-2-isopropylmalate. Its pathway is amino-acid biosynthesis; L-leucine biosynthesis; L-leucine from 3-methyl-2-oxobutanoate: step 2/4. Functionally, catalyzes the isomerization between 2-isopropylmalate and 3-isopropylmalate, via the formation of 2-isopropylmaleate. The polypeptide is 3-isopropylmalate dehydratase small subunit (Saccharolobus islandicus (strain M.14.25 / Kamchatka #1) (Sulfolobus islandicus)).